A 211-amino-acid polypeptide reads, in one-letter code: Histone H1-beta, late embryonic (211 aa).

Disordered regions lie at residues 1 to 22 (MAAE…PSSS) and 81 to 211 (KGAS…AAKK). The region spanning 17–91 (AHPSSSEMVL…GASGSFKLGK (75 aa)) is the H15 domain. 2 stretches are compositionally biased toward basic and acidic residues: residues 95–107 (GKSD…DAAK) and 114–123 (KKKEAKEKKA). Basic residues-rich tracts occupy residues 124–177 (ARSK…KKAA) and 185–211 (KAAK…AAKK).

Belongs to the histone H1/H5 family.

It is found in the nucleus. Its subcellular location is the chromosome. Functionally, histones H1 are necessary for the condensation of nucleosome chains into higher-order structures. This chain is Histone H1-beta, late embryonic, found in Strongylocentrotus purpuratus (Purple sea urchin).